The sequence spans 393 residues: NAD(P)H-quinone oxidoreductase subunit H, chloroplastic (393 aa).

The protein belongs to the complex I 49 kDa subunit family. As to quaternary structure, NDH is composed of at least 16 different subunits, 5 of which are encoded in the nucleus.

It localises to the plastid. The protein resides in the chloroplast thylakoid membrane. It carries out the reaction a plastoquinone + NADH + (n+1) H(+)(in) = a plastoquinol + NAD(+) + n H(+)(out). The catalysed reaction is a plastoquinone + NADPH + (n+1) H(+)(in) = a plastoquinol + NADP(+) + n H(+)(out). Functionally, NDH shuttles electrons from NAD(P)H:plastoquinone, via FMN and iron-sulfur (Fe-S) centers, to quinones in the photosynthetic chain and possibly in a chloroplast respiratory chain. The immediate electron acceptor for the enzyme in this species is believed to be plastoquinone. Couples the redox reaction to proton translocation, and thus conserves the redox energy in a proton gradient. This chain is NAD(P)H-quinone oxidoreductase subunit H, chloroplastic, found in Carica papaya (Papaya).